A 162-amino-acid chain; its full sequence is Universal stress protein MJ0577 (162 aa).

ATP is bound by residues Pro11, Val41, 127 to 133 (GSHGKTN), and 141 to 143 (SVT).

It belongs to the universal stress protein A family. In terms of assembly, homodimer. Requires Mn(2+) as cofactor.

It localises to the cytoplasm. In Methanocaldococcus jannaschii (strain ATCC 43067 / DSM 2661 / JAL-1 / JCM 10045 / NBRC 100440) (Methanococcus jannaschii), this protein is Universal stress protein MJ0577.